Reading from the N-terminus, the 252-residue chain is Probable transcriptional regulator SauR (252 aa).

Positions 6–68 constitute an HTH iclR-type domain; that stretch reads NAAAVRAFRI…AGNRHYECSS (63 aa). Positions 28–47 form a DNA-binding region, H-T-H motif; it reads LAAIVQAIELPKQTVHRILK. Residues 83-252 enclose the IclR-ED domain; that stretch reads PAAARHAILQ…ADEMVKTFCE (170 aa).

In terms of biological role, may regulate transcription of the sauSTU operon. The chain is Probable transcriptional regulator SauR (sauR) from Cupriavidus necator (strain ATCC 17699 / DSM 428 / KCTC 22496 / NCIMB 10442 / H16 / Stanier 337) (Ralstonia eutropha).